The following is a 21-amino-acid chain: Short neurotoxin E1 (21 aa).

A disordered region spans residues Met-1–Gln-21.

Post-translationally, contains 4 disulfide bonds. Expressed by the venom gland.

The protein resides in the secreted. Binds to muscle nicotinic acetylcholine receptor (nAChR) and inhibit acetylcholine from binding to the receptor, thereby impairing neuromuscular transmission. This chain is Short neurotoxin E1, found in Micrurus pyrrhocryptus (Coral snake).